Consider the following 342-residue polypeptide: Holliday junction branch migration complex subunit RuvB (342 aa).

A large ATPase domain (RuvB-L) region spans residues 1 to 184; sequence MDNERVITAV…FGIVQRLEFY (184 aa). ATP-binding positions include Ile23, Arg24, Gly65, Lys68, Thr69, Thr70, 131 to 133, Arg174, Tyr184, and Arg221; that span reads EDY. A Mg(2+)-binding site is contributed by Thr69. The segment at 185-255 is small ATPAse domain (RuvB-S); the sequence is SVDDLSGIVS…IAQRALDMLE (71 aa). The head domain (RuvB-H) stretch occupies residues 258–342; sequence SCGLDGTDRR…PRQDGDLFND (85 aa). Residues Arg313 and Arg318 each contribute to the DNA site.

It belongs to the RuvB family. As to quaternary structure, homohexamer. Forms an RuvA(8)-RuvB(12)-Holliday junction (HJ) complex. HJ DNA is sandwiched between 2 RuvA tetramers; dsDNA enters through RuvA and exits via RuvB. An RuvB hexamer assembles on each DNA strand where it exits the tetramer. Each RuvB hexamer is contacted by two RuvA subunits (via domain III) on 2 adjacent RuvB subunits; this complex drives branch migration. In the full resolvosome a probable DNA-RuvA(4)-RuvB(12)-RuvC(2) complex forms which resolves the HJ.

It is found in the cytoplasm. It carries out the reaction ATP + H2O = ADP + phosphate + H(+). Its function is as follows. The RuvA-RuvB-RuvC complex processes Holliday junction (HJ) DNA during genetic recombination and DNA repair, while the RuvA-RuvB complex plays an important role in the rescue of blocked DNA replication forks via replication fork reversal (RFR). RuvA specifically binds to HJ cruciform DNA, conferring on it an open structure. The RuvB hexamer acts as an ATP-dependent pump, pulling dsDNA into and through the RuvAB complex. RuvB forms 2 homohexamers on either side of HJ DNA bound by 1 or 2 RuvA tetramers; 4 subunits per hexamer contact DNA at a time. Coordinated motions by a converter formed by DNA-disengaged RuvB subunits stimulates ATP hydrolysis and nucleotide exchange. Immobilization of the converter enables RuvB to convert the ATP-contained energy into a lever motion, pulling 2 nucleotides of DNA out of the RuvA tetramer per ATP hydrolyzed, thus driving DNA branch migration. The RuvB motors rotate together with the DNA substrate, which together with the progressing nucleotide cycle form the mechanistic basis for DNA recombination by continuous HJ branch migration. Branch migration allows RuvC to scan DNA until it finds its consensus sequence, where it cleaves and resolves cruciform DNA. The sequence is that of Holliday junction branch migration complex subunit RuvB from Alcanivorax borkumensis (strain ATCC 700651 / DSM 11573 / NCIMB 13689 / SK2).